Consider the following 331-residue polypeptide: Phenylalanine--tRNA ligase alpha subunit (331 aa).

Glutamate 252 is a Mg(2+) binding site.

The protein belongs to the class-II aminoacyl-tRNA synthetase family. Phe-tRNA synthetase alpha subunit type 1 subfamily. Tetramer of two alpha and two beta subunits. It depends on Mg(2+) as a cofactor.

The protein resides in the cytoplasm. The enzyme catalyses tRNA(Phe) + L-phenylalanine + ATP = L-phenylalanyl-tRNA(Phe) + AMP + diphosphate + H(+). This chain is Phenylalanine--tRNA ligase alpha subunit, found in Stenotrophomonas maltophilia (strain R551-3).